Consider the following 1288-residue polypeptide: Vacuolating cytotoxin autotransporter (1288 aa).

Positions 1-33 (MEIQQTHRKINRPLVSLVLAGALISAIPQESHA) are cleaved as a signal peptide. Positions 326-377 (PPEGGYKDKPNSTTSQSGTKNDKKEISQNNNSNTEVINPPNNTQKTETEPTQ) are disordered. Residues 352 to 376 (SQNNNSNTEVINPPNNTQKTETEPT) are compositionally biased toward polar residues. One can recognise an Autotransporter domain in the interval 1015–1288 (KYEKPTNVWA…ASNLGMRYSF (274 aa)).

It localises to the periplasm. The protein resides in the secreted. The protein localises to the cell surface. Its subcellular location is the cell outer membrane. Induces vacuolation of eukaryotic cells. Causes ulceration and gastric lesions. The polypeptide is Vacuolating cytotoxin autotransporter (vacA) (Helicobacter pylori (strain J99 / ATCC 700824) (Campylobacter pylori J99)).